The sequence spans 113 residues: Iron-sulfur cluster assembly protein CyaY (113 aa).

It belongs to the frataxin family.

Functionally, involved in iron-sulfur (Fe-S) cluster assembly. May act as a regulator of Fe-S biogenesis. In Ralstonia nicotianae (strain ATCC BAA-1114 / GMI1000) (Ralstonia solanacearum), this protein is Iron-sulfur cluster assembly protein CyaY.